The following is a 189-amino-acid chain: Ornithine decarboxylase antizyme 2 (189 aa).

A Phosphoserine modification is found at Ser186.

The protein belongs to the ODC antizyme family. Interacts with ODC1 and thereby sterically blocks ODC homodimerization. Interacts with AZIN2; this interaction disrupts the interaction between the antizyme and ODC1.

The protein resides in the nucleus. In terms of biological role, ornithine decarboxylase (ODC) antizyme protein that negatively regulates ODC activity and intracellular polyamine biosynthesis and uptake in response to increased intracellular polyamine levels. Binds to ODC monomers, inhibiting the assembly of the functional ODC homodimers. Does not target the ODC monomers for degradation, which allows a protein synthesis-independent restoration of ODC activity. Involved in the translocation of AZIN2 from ER-Golgi intermediate compartment (ERGIC) to the cytosol. The polypeptide is Ornithine decarboxylase antizyme 2 (OAZ2) (Homo sapiens (Human)).